Consider the following 500-residue polypeptide: Glycerol-3-phosphate acyltransferase 7 (500 aa).

Helical transmembrane passes span 38-58 (GLIR…LDVL) and 235-255 (ALII…RIFV). Positions 298–303 (HRTLMD) match the HXXXXD motif motif.

It belongs to the GPAT/DAPAT family. As to expression, weakly or not expressed in roots, leaves, seedlings, developing siliques and flower buds.

Its subcellular location is the membrane. It catalyses the reaction sn-glycerol 3-phosphate + an acyl-CoA = a 1-acyl-sn-glycero-3-phosphate + CoA. Its pathway is phospholipid metabolism; CDP-diacylglycerol biosynthesis; CDP-diacylglycerol from sn-glycerol 3-phosphate: step 1/3. Esterifies acyl-group from acyl-ACP to the sn-1 position of glycerol-3-phosphate, an essential step in glycerolipid biosynthesis. The protein is Glycerol-3-phosphate acyltransferase 7 (GPAT7) of Arabidopsis thaliana (Mouse-ear cress).